A 476-amino-acid polypeptide reads, in one-letter code: UPF0481 protein At3g47200 (476 aa).

Positions 1-24 are disordered; that stretch reads MADKTDIISSSSDKASPPPPSAFR. 2 helical membrane passes run 133–153 and 439–459; these read LMFM…IMSG and AVLF…LSYL.

This sequence belongs to the UPF0481 family.

The protein resides in the membrane. The protein is UPF0481 protein At3g47200 of Arabidopsis thaliana (Mouse-ear cress).